The chain runs to 471 residues: V-type ATP synthase beta chain (471 aa).

Belongs to the ATPase alpha/beta chains family.

Produces ATP from ADP in the presence of a proton gradient across the membrane. The V-type beta chain is a regulatory subunit. In Deinococcus radiodurans (strain ATCC 13939 / DSM 20539 / JCM 16871 / CCUG 27074 / LMG 4051 / NBRC 15346 / NCIMB 9279 / VKM B-1422 / R1), this protein is V-type ATP synthase beta chain (atpB).